We begin with the raw amino-acid sequence, 778 residues long: ATP synthase subunit beta (778 aa).

The interval 1–289 is unknown; that stretch reads MKENNKTIEA…IDIYEENEDL (289 aa). The tract at residues 290 to 778 is ATP synthase subunit beta; the sequence is MKLNTLKSDK…KPLNSENKSN (489 aa). Position 447 to 454 (447 to 454) interacts with ATP; that stretch reads GGAGVGKT.

Belongs to the ATPase alpha/beta chains family. As to quaternary structure, F-type ATPases have 2 components, CF(1) - the catalytic core - and CF(0) - the membrane proton channel. CF(1) has five subunits: alpha(3), beta(3), gamma(1), delta(1), epsilon(1). CF(0) has three main subunits: a(1), b(2) and c(9-12). The alpha and beta chains form an alternating ring which encloses part of the gamma chain. CF(1) is attached to CF(0) by a central stalk formed by the gamma and epsilon chains, while a peripheral stalk is formed by the delta and b chains.

Its subcellular location is the cell membrane. It carries out the reaction ATP + H2O + 4 H(+)(in) = ADP + phosphate + 5 H(+)(out). Produces ATP from ADP in the presence of a proton gradient across the membrane. The catalytic sites are hosted primarily by the beta subunits. The sequence is that of ATP synthase subunit beta (atpD) from Malacoplasma penetrans (strain HF-2) (Mycoplasma penetrans).